We begin with the raw amino-acid sequence, 554 residues long: Glutamine--tRNA ligase (554 aa).

A 'HIGH' region motif is present at residues 34–44 (PEPNGYLHIGH). Residues 35–37 (EPN) and 41–47 (HIGHAKS) contribute to the ATP site. Asp-67 and Tyr-212 together coordinate L-glutamine. Residues Thr-231, 261 to 262 (RL), and 269 to 271 (MSK) contribute to the ATP site. A 'KMSKS' region motif is present at residues 268–272 (VMSKR). The interval 317-324 (TKQDNTIE) is interaction with tRNA.

The protein belongs to the class-I aminoacyl-tRNA synthetase family. As to quaternary structure, monomer.

Its subcellular location is the cytoplasm. The catalysed reaction is tRNA(Gln) + L-glutamine + ATP = L-glutaminyl-tRNA(Gln) + AMP + diphosphate. This Escherichia coli O127:H6 (strain E2348/69 / EPEC) protein is Glutamine--tRNA ligase.